The chain runs to 407 residues: Uronyl 2-sulfotransferase (407 aa).

Positions 1–20 are disordered; that stretch reads MKKKQQQHPGGGTDPWPHGA. Topologically, residues 1-49 are cytoplasmic; sequence MKKKQQQHPGGGTDPWPHGAPVGGAPPCLGSCKRRIPLLPFLRFSLRDY. The helical; Signal-anchor for type II membrane protein transmembrane segment at 50–70 threads the bilayer; sequence GFCMATLLVFCLGSLFYQLSG. Topologically, residues 71-407 are lumenal; it reads GPPRFLLDLR…EKWLEDIYKR (337 aa). N-linked (GlcNAc...) asparagine glycans are attached at residues Asn85, Asn141, and Asn156. His169 is a catalytic residue. 2 N-linked (GlcNAc...) asparagine glycosylation sites follow: Asn174 and Asn320. Positions 386–400 are enriched in acidic residues; sequence TEEPIDDEEQDDEKW. A disordered region spans residues 386–407; sequence TEEPIDDEEQDDEKWLEDIYKR.

Belongs to the sulfotransferase 3 family.

Its subcellular location is the golgi apparatus membrane. Sulfotransferase that catalyzes the transfer of sulfate to the position 2 of uronyl residues in glycosaminoglycan chains. Has mainly activity toward iduronyl residues in dermatan sulfate, and weaker activity toward glucuronyl residues of chondroitin sulfate. Has no activity toward desulfated N-resulfated heparin. The chain is Uronyl 2-sulfotransferase from Mus musculus (Mouse).